The primary structure comprises 454 residues: Growth/differentiation factor 6 (454 aa).

The signal sequence occupies residues 1–22 (MDTPRVLLWAIFLISFLWDLPG). Residues 23 to 334 (FQQASISSSS…LPSPGRRRRR (312 aa)) constitute a propeptide that is removed on maturation. Residues 28–93 (ISSSSSSSTE…QGQEPPGRGL (66 aa)) form a disordered region. 2 stretches are compositionally biased toward basic and acidic residues: residues 39–52 (DSTK…EGKM) and 60–73 (AEGR…LRQK). A compositionally biased stretch (low complexity) spans 81-92 (GQHQGQEPPGRG). Asparagine 117 carries an N-linked (GlcNAc...) asparagine glycan. Disordered stretches follow at residues 247–268 (DTGA…SLGF) and 303–350 (AEAA…KKSR). Low complexity predominate over residues 303 to 319 (AEAAGAEGSWPAPSGSP). The segment covering 329–350 (GRRRRRTAFASRHGKRHGKKSR) has biased composition (basic residues). 3 disulfide bridges follow: cysteine 353/cysteine 419, cysteine 382/cysteine 451, and cysteine 386/cysteine 453.

This sequence belongs to the TGF-beta family. Homodimer; disulfide-linked. In terms of tissue distribution, expressed in different subsets of developing joints. Highly expressed in the cochlea.

The protein localises to the secreted. Its function is as follows. Growth factor that controls proliferation and cellular differentiation in the retina and bone formation. Plays a key role in regulating apoptosis during retinal development. Establishes dorsal-ventral positional information in the retina and controls the formation of the retinotectal map. Required for normal formation of bones and joints in the limbs, skull, digits and axial skeleton. Plays a key role in establishing boundaries between skeletal elements during development. Regulation of GDF6 expression seems to be a mechanism for evolving species-specific changes in skeletal structures. Seems to positively regulate differentiation of chondrogenic tissue through the growth factor receptors subunits BMPR1A, BMPR1B, BMPR2 and ACVR2A, leading to the activation of SMAD1-SMAD5-SMAD8 complex. The regulation of chondrogenic differentiation is inhibited by NOG. Also involved in the induction of adipogenesis from mesenchymal stem cells. This mechanism acts through the growth factor receptors subunits BMPR1A, BMPR2 and ACVR2A and the activation of SMAD1-SMAD5-SMAD8 complex and MAPK14/p38. This chain is Growth/differentiation factor 6 (Gdf6), found in Mus musculus (Mouse).